Consider the following 129-residue polypeptide: Small ribosomal subunit protein uS11 (129 aa).

The protein belongs to the universal ribosomal protein uS11 family. In terms of assembly, part of the 30S ribosomal subunit. Interacts with proteins S7 and S18. Binds to IF-3.

Functionally, located on the platform of the 30S subunit, it bridges several disparate RNA helices of the 16S rRNA. Forms part of the Shine-Dalgarno cleft in the 70S ribosome. The polypeptide is Small ribosomal subunit protein uS11 (Nitrosospira multiformis (strain ATCC 25196 / NCIMB 11849 / C 71)).